Reading from the N-terminus, the 379-residue chain is Succinyl-diaminopimelate desuccinylase (379 aa).

His-68 contacts Zn(2+). Asp-70 is an active-site residue. Position 101 (Asp-101) interacts with Zn(2+). Glu-135 acts as the Proton acceptor in catalysis. Zn(2+)-binding residues include Glu-136, Glu-164, and His-350.

The protein belongs to the peptidase M20A family. DapE subfamily. In terms of assembly, homodimer. The cofactor is Zn(2+). It depends on Co(2+) as a cofactor.

The enzyme catalyses N-succinyl-(2S,6S)-2,6-diaminopimelate + H2O = (2S,6S)-2,6-diaminopimelate + succinate. It functions in the pathway amino-acid biosynthesis; L-lysine biosynthesis via DAP pathway; LL-2,6-diaminopimelate from (S)-tetrahydrodipicolinate (succinylase route): step 3/3. Its function is as follows. Catalyzes the hydrolysis of N-succinyl-L,L-diaminopimelic acid (SDAP), forming succinate and LL-2,6-diaminopimelate (DAP), an intermediate involved in the bacterial biosynthesis of lysine and meso-diaminopimelic acid, an essential component of bacterial cell walls. The sequence is that of Succinyl-diaminopimelate desuccinylase from Bordetella bronchiseptica (strain ATCC BAA-588 / NCTC 13252 / RB50) (Alcaligenes bronchisepticus).